The following is a 356-amino-acid chain: Serine/arginine-rich splicing factor RS41 (356 aa).

2 RRM domains span residues 2–74 and 96–167; these read KPVF…WTKN and KTLF…YAVK. A disordered region spans residues 73 to 92; sequence KNDRGGAGRSGGSRRSSSGL. Residues 168–186 show a composition bias toward basic and acidic residues; it reads DDDSRGNGYSPERRRDRSP. The interval 168 to 356 is disordered; the sequence is DDDSRGNGYS…SPSRSPPAEE (189 aa). Phosphoserine is present on residues serine 192, serine 194, serine 210, serine 239, serine 254, and serine 274. Basic and acidic residues predominate over residues 238–253; it reads LSPDYKRDDRRRERVA. 3 tandem repeats follow at residues 267–278, 279–290, and 291–302. Residues 267–307 form a 4 X 12 AA tandem repeats of [KE]-[GK]-R -[GR]-E-S-R-S-P-P-P-Y region; the sequence is KGRGESRSPPPYEKRRESRSPPPYEKRRESRSPPPYEKRRE. The segment covering 268-306 has biased composition (basic and acidic residues); sequence GRGESRSPPPYEKRRESRSPPPYEKRRESRSPPPYEKRR. Residues 303-307 form a 4; truncated repeat; that stretch reads EKRRE. Serine 309, serine 324, serine 342, serine 347, and serine 351 each carry phosphoserine.

It belongs to the splicing factor SR family. RS subfamily. As to quaternary structure, component of the spliceosome. Interacts with RCF3 and CPL1. Interacts with DRB1/HYL1 and SE. As to expression, leaves, stem, roots and flowers.

It is found in the nucleus. The protein localises to the nucleus speckle. In terms of biological role, required for constitutive and alternative pre-mRNA splicing. Involved in primary miRNA processing and pri-miRNA biogenesis. Binds both intronless and intron-containing pri-miRNAs. The protein is Serine/arginine-rich splicing factor RS41 (RS41) of Arabidopsis thaliana (Mouse-ear cress).